We begin with the raw amino-acid sequence, 93 residues long: MSEATVNDKKKKGIQKVRIGYVVSDKMQKTIVVELEDRNQHALYGKTIRTTSKVKVHDENETAGVGDRVRIEECRPLSANKHFRLVEILEKAK.

This sequence belongs to the universal ribosomal protein uS17 family. Part of the 30S ribosomal subunit.

One of the primary rRNA binding proteins, it binds specifically to the 5'-end of 16S ribosomal RNA. The chain is Small ribosomal subunit protein uS17 from Corynebacterium kroppenstedtii (strain DSM 44385 / JCM 11950 / CIP 105744 / CCUG 35717).